A 497-amino-acid polypeptide reads, in one-letter code: Maintenance of mitochondrial morphology protein 1 (497 aa).

Residues 1 to 28 (MSSVLNPSSPHSWDLCCSSSSNRSYHRP) lie on the Lumenal side of the membrane. A helical membrane pass occupies residues 29 to 55 (THPIVGLLVGQLSVVLLIGAFIKFFIF). Topologically, residues 56 to 497 (GEAPPSPSRS…GSLPDAVPIT (442 aa)) are cytoplasmic. 4 disordered regions span residues 60–107 (PSPS…SSST), 284–330 (ESST…STTG), 402–421 (TGVR…AAGV), and 437–497 (EMLH…VPIT). Positions 66–77 (QTHRTSQHKRSY) are enriched in basic residues. Basic and acidic residues predominate over residues 81 to 94 (GARDLSPRTLKEKP). Polar residues-rich tracts occupy residues 95–107 (SSNV…SSST), 284–302 (ESST…NLRS), and 311–330 (PQES…STTG). In terms of domain architecture, SMP-LTD spans 140–393 (QPESLDWFNV…EPRVQVVALP (254 aa)). A compositionally biased stretch (low complexity) spans 412–421 (DVSSSDAAGV). Positions 440–451 (HAAREVDAEGLR) are enriched in basic and acidic residues. Positions 462–473 (GSSSKYAQQNQS) are enriched in polar residues. Over residues 474 to 484 (SRERGRADDPF) the composition is skewed to basic and acidic residues.

This sequence belongs to the MMM1 family. Homodimer. Component of the ER-mitochondria encounter structure (ERMES) or MDM complex, composed of MMM1, MDM10, MDM12 and MDM34. An MMM1 homodimer associates with one molecule of MDM12 on each side in a pairwise head-to-tail manner, and the SMP-LTD domains of MMM1 and MDM12 generate a continuous hydrophobic tunnel for phospholipid trafficking.

The protein resides in the endoplasmic reticulum membrane. Component of the ERMES/MDM complex, which serves as a molecular tether to connect the endoplasmic reticulum (ER) and mitochondria. Components of this complex are involved in the control of mitochondrial shape and protein biogenesis, and function in nonvesicular lipid trafficking between the ER and mitochondria. The MDM12-MMM1 subcomplex functions in the major beta-barrel assembly pathway that is responsible for biogenesis of all outer membrane beta-barrel proteins, and acts in a late step after the SAM complex. The MDM10-MDM12-MMM1 subcomplex further acts in the TOM40-specific pathway after the action of the MDM12-MMM1 complex. Essential for establishing and maintaining the structure of mitochondria and maintenance of mtDNA nucleoids. The chain is Maintenance of mitochondrial morphology protein 1 from Uncinocarpus reesii (strain UAMH 1704).